Reading from the N-terminus, the 218-residue chain is MLFISATNTNAGKTTCARLLAQYCNACGVKTILLKPIETGVNDAINHSSDAHLFLQDNRLLDRSLTLKDISFYRYHKASAPLIAQQEEDPNAPIDTDNLTQRLHNFTKTYDLVIVEGAGGLCVPITLEENMLDFALKLKAKMLLISHDNLGLINDCLLNDFLLKSYQLDYKIAINLRGNNTAFYSVSLPYIELFNKRSNNPIVIFQQSLKELMSFALK.

ATP is bound at residue N10–T15. T14 serves as a coordination point for Mg(2+). K35 is a catalytic residue. T39 contacts substrate. E116 contacts Mg(2+). Residues E116–G119 and L176–R177 each bind ATP.

The protein belongs to the dethiobiotin synthetase family. Homodimer. It depends on Mg(2+) as a cofactor.

It is found in the cytoplasm. It catalyses the reaction (7R,8S)-7,8-diammoniononanoate + CO2 + ATP = (4R,5S)-dethiobiotin + ADP + phosphate + 3 H(+). It participates in cofactor biosynthesis; biotin biosynthesis; biotin from 7,8-diaminononanoate: step 1/2. Its function is as follows. Catalyzes a mechanistically unusual reaction, the ATP-dependent insertion of CO2 between the N7 and N8 nitrogen atoms of 7,8-diaminopelargonic acid (DAPA, also called 7,8-diammoniononanoate) to form a ureido ring. This Helicobacter pylori (strain J99 / ATCC 700824) (Campylobacter pylori J99) protein is ATP-dependent dethiobiotin synthetase BioD.